A 602-amino-acid chain; its full sequence is Na(+)/dicarboxylate cotransporter 3 (602 aa).

Over 1-16 (MAALAAAAKKVWSARR) the chain is Cytoplasmic. Residues 17–37 (LLVLLFTPLALLPVVFALPPK) form a helical membrane-spanning segment. The Extracellular portion of the chain corresponds to 38-55 (EGRCLFVILLMAVYWCTE). The chain crosses the membrane as a helical span at residues 56-76 (ALPLSVTALLPIVLFPFMGIL). Topologically, residues 77-82 (PSNKVC) are cytoplasmic. Residues 83–103 (PQYFLDTNFLFLSGLIMASAI) traverse the membrane as a helical segment. The Extracellular segment spans residues 104–137 (EEWNLHRRIALKILMLVGVQPARLILGMMVTTSF). A helical membrane pass occupies residues 138–158 (LSMWLSNTASTAMMLPIANAI). Over 159–229 (LKSLFGQKEV…SRKEDEYRRN (71 aa)) the chain is Cytoplasmic. Residues 230 to 250 (IWKGFLISIPYSASIGGTATL) traverse the membrane as a helical segment. Over 251–278 (TGTAPNLILLGQLKSFFPQCDVVNFGSW) the chain is Extracellular. Residues 279 to 299 (FIFAFPLMLLFLLAGWLWISF) traverse the membrane as a helical segment. Residues 300–336 (LYGGLSFRGWRKNKSEIRTNAEDRARAVIREEYQNLG) are Cytoplasmic-facing. Residues 337–357 (PIKFAEQAVFILFCMFAILLF) traverse the membrane as a helical segment. Residues 358–372 (TRDPKFIPGWASLFN) are Extracellular-facing. Residues 373-393 (PGFLSDAVTGVAIVTILFFFP) form a helical membrane-spanning segment. Over 394-422 (SQRPSLKWWFDFKAPNTETEPLLTWKKAQ) the chain is Cytoplasmic. Residues 423–443 (ETVPWNIILLLGGGFAMAKGC) constitute an intramembrane region (helical). At 444-461 (EESGLSVWIGGQLHPLEN) the chain is on the cytoplasmic side. Residues 462-482 (VPPALAVLLITVVIAFFTEFA) form a helical membrane-spanning segment. Residues 483–505 (SNTATIIIFLPVLAELAIRLRVH) lie on the Extracellular side of the membrane. A helical transmembrane segment spans residues 506–526 (PLYLMIPGTVGCSFAFMLPVS). Residues 527-546 (TPPNSIAFASGHLLVKDMVR) lie on the Cytoplasmic side of the membrane. A helical transmembrane segment spans residues 547-567 (TGLLMNLMGVLLLSLAMNTWA). Residues 568–602 (QTIFQLGTFPDWADMYSVNVTALPPTLANDTFRTL) are Extracellular-facing. Asn586 and Asn596 each carry an N-linked (GlcNAc...) asparagine glycan.

It belongs to the SLC13A/DASS transporter (TC 2.A.47) family. NADC subfamily. As to expression, expression is highest in kidney. Detected in placenta, brain, liver and pancreas.

The protein localises to the cell membrane. It catalyses the reaction succinate(out) + 3 Na(+)(out) = succinate(in) + 3 Na(+)(in). It carries out the reaction 2-oxoglutarate(out) + 3 Na(+)(out) = 2-oxoglutarate(in) + 3 Na(+)(in). The catalysed reaction is N-acetyl-L-aspartate(out) + 3 Na(+)(out) = N-acetyl-L-aspartate(in) + 3 Na(+)(in). The enzyme catalyses glutarate(out) + 3 Na(+)(out) = glutarate(in) + 3 Na(+)(in). It catalyses the reaction fumarate(out) + 3 Na(+)(out) = fumarate(in) + 3 Na(+)(in). It carries out the reaction malate(out) + 3 Na(+)(out) = malate(in) + 3 Na(+)(in). The catalysed reaction is 2,2-dimethylsuccinate(out) + 3 Na(+)(out) = 2,2-dimethylsuccinate(in) + 3 Na(+)(in). The enzyme catalyses 2,3-dimethylsuccinate(out) + 3 Na(+)(out) = 2,3-dimethylsuccinate(in) + 3 Na(+)(in). It catalyses the reaction itaconate(out) + 3 Na(+)(out) = itaconate(in) + 3 Na(+)(in). With respect to regulation, li(+) decreases succinate transport in the presence of Na(+). High-affinity sodium-dicarboxylate cotransporter that accepts a range of substrates with 4-6 carbon atoms, such as the citric acid cycle intermediates succinate and alpha-ketoglutarate (2-oxoglutarate), as well as other compounds including N-acetyl-L-aspartate. Transports the dicarboxylate into the cell with a probable stoichiometry of 3 Na(+) for 1 divalent dicarboxylate, rendering the process electrogenic. Can transport citrate in a Na(+)-dependent manner, recognizing the divalent form of citrate rather than the trivalent form which is normally found in blood. Imports itaconate in hepatocytes leading to activation of TFEB-dependent lysosomal biogenesis involved in antibacterial innate immune response. The sequence is that of Na(+)/dicarboxylate cotransporter 3 (SLC13A3) from Homo sapiens (Human).